The chain runs to 286 residues: Glucose import system permease protein GlcT (286 aa).

6 consecutive transmembrane segments (helical) span residues 6-26 (TIILVAPTAIFSAILLYLVIW), 71-91 (VILVVIGNILGIFIAALLYFL), 103-123 (IVIYPLSISMAVNGLIWLWLF), 154-174 (LVLVSVWAYTGIAALFYLAGF), 199-219 (ILIPNSLNSFIIATALLFLFS), and 260-280 (VATMITLIATIIIIPYALTVI). The 213-residue stretch at 63-275 (LLHSIELSVI…LIATIIIIPY (213 aa)) folds into the ABC transmembrane type-1 domain.

The protein belongs to the binding-protein-dependent transport system permease family. The complex is composed of two ATP-binding proteins (GlcV), two transmembrane proteins (GlcT and GlcU) and a solute-binding protein (GlcS).

The protein resides in the cell membrane. Part of the ABC transporter complex GlcSTUV involved in glucose uptake. Responsible for the translocation of the substrate across the membrane. This chain is Glucose import system permease protein GlcT, found in Saccharolobus solfataricus (strain ATCC 35092 / DSM 1617 / JCM 11322 / P2) (Sulfolobus solfataricus).